The primary structure comprises 265 residues: Protein HesA, vegetative (265 aa).

Belongs to the HesA/MoeB/ThiF family.

This Trichormus variabilis (strain ATCC 29413 / PCC 7937) (Anabaena variabilis) protein is Protein HesA, vegetative (hesA2).